Here is a 304-residue protein sequence, read N- to C-terminus: MQSRFRSDRRLTVRMGVTLFLLGLLYVGFVAALIALLKSWVLVVVIVALVFGAQYWFSDRIALFAMRGRVVEREEYPELHGVVDRLAAMADMPKPVVAVSEMEMPNAFATGRNPDNAVVCVTTGLLRRLEPAELEGVLAHELSHVAHKDVAVITVASFLGVIAGLIVRFAFYSQLFGGRRDQNTLAVLAVVMGVSAAVYALSFLLIRALSRYRELAADRAAALLTGRPSALAAALTKVTGDIARIPTKDLRTAQAFNAFYFTPAFGSDPGLGRFFATHPSLEQRLDQLGRISTELGEAPAPGKA.

2 consecutive transmembrane segments (helical) span residues 17–37 (VTLF…IALL) and 39–59 (SWVL…WFSD). H140 provides a ligand contact to Zn(2+). Residue E141 is part of the active site. H144 contributes to the Zn(2+) binding site. Transmembrane regions (helical) follow at residues 151–171 (AVIT…RFAF) and 186–206 (AVLA…FLLI). Position 214 (E214) interacts with Zn(2+).

It belongs to the peptidase M48B family. Zn(2+) is required as a cofactor.

It is found in the cell membrane. The chain is Protease HtpX homolog 1 from Streptomyces coelicolor (strain ATCC BAA-471 / A3(2) / M145).